Here is a 751-residue protein sequence, read N- to C-terminus: Semaphorin-3C (751 aa).

Positions 1–20 are cleaved as a signal peptide; it reads MAFRAICVLVGVFICSICVR. Residues 28–511 form the Sema domain; that stretch reads RVYLTFDELR…SNEGVSQVSL (484 aa). The N-linked (GlcNAc...) asparagine glycan is linked to asparagine 81. An intrachain disulfide couples cysteine 101 to cysteine 112. A glycan (N-linked (GlcNAc...) asparagine) is linked at asparagine 123. Cysteine 130 and cysteine 139 are joined by a disulfide. Asparagine 252 and asparagine 268 each carry an N-linked (GlcNAc...) asparagine glycan. Cystine bridges form between cysteine 266/cysteine 378 and cysteine 290/cysteine 338. Asparagine 465 carries N-linked (GlcNAc...) asparagine glycosylation. A disulfide bond links cysteine 514 and cysteine 532. Residues 571–655 form the Ig-like C2-type domain; it reads AYRNAAEIVQ…TENSFKQTIA (85 aa). N-linked (GlcNAc...) asparagine glycans are attached at residues asparagine 585 and asparagine 586. Residues cysteine 643 and cysteine 709 are joined by a disulfide bond.

It belongs to the semaphorin family. In terms of assembly, interacts with PLXND1.

Its subcellular location is the secreted. In terms of biological role, binds to plexin family members and plays an important role in the regulation of developmental processes. Required for normal cardiovascular development during embryogenesis. Functions as attractant for growing axons, and thereby plays an important role in axon growth and axon guidance. This is Semaphorin-3C (Sema3c) from Mus musculus (Mouse).